A 640-amino-acid chain; its full sequence is Probable Ufm1-specific protease (640 aa).

Residues C467, D591, and H593 contribute to the active site.

The protein belongs to the peptidase C78 family.

Thiol protease which recognizes and hydrolyzes the peptide bond at the C-terminal Gly of ufm-1, a ubiquitin-like modifier protein bound to a number of target proteins. This Oryza sativa subsp. japonica (Rice) protein is Probable Ufm1-specific protease.